Reading from the N-terminus, the 210-residue chain is Beta-crystallin A4 (210 aa).

The segment at 1-25 is N-terminal arm; that stretch reads MSGMFSGSISETSGMSLQCTKSAGH. Beta/gamma crystallin 'Greek key' domains follow at residues 26–65 and 66–112; these read WKIV…KVLS and GAWV…RPVA. The connecting peptide stretch occupies residues 113 to 118; the sequence is CANHRD. Beta/gamma crystallin 'Greek key' domains follow at residues 119–160 and 161–209; these read SRLT…HVHS and GAWV…RRIQ.

It belongs to the beta/gamma-crystallin family. As to quaternary structure, homo/heterodimer, or complexes of higher-order. The structure of beta-crystallin oligomers seems to be stabilized through interactions between the N-terminal arms.

In terms of biological role, crystallins are the dominant structural components of the vertebrate eye lens. In Bos taurus (Bovine), this protein is Beta-crystallin A4 (CRYBA4).